The chain runs to 560 residues: Membrane protein insertase YidC (560 aa).

A run of 6 helical transmembrane segments spans residues 5-25, 334-354, 357-377, 431-451, 476-496, and 522-542; these read IINL…WQYF, AIDF…MNFF, YVGN…LLMF, LPIL…YVTI, LFGL…WPIL, and FMPL…LIYW.

It belongs to the OXA1/ALB3/YidC family. Type 1 subfamily. In terms of assembly, interacts with the Sec translocase complex via SecD. Specifically interacts with transmembrane segments of nascent integral membrane proteins during membrane integration.

It localises to the cell inner membrane. Its function is as follows. Required for the insertion and/or proper folding and/or complex formation of integral membrane proteins into the membrane. Involved in integration of membrane proteins that insert both dependently and independently of the Sec translocase complex, as well as at least some lipoproteins. Aids folding of multispanning membrane proteins. This is Membrane protein insertase YidC from Rickettsia conorii (strain ATCC VR-613 / Malish 7).